Here is a 165-residue protein sequence, read N- to C-terminus: Transmembrane protein 253 (165 aa).

3 helical membrane passes run 31–51, 60–80, and 91–111; these read LVLAVSQLWLAVAVVPFAVSV, MTTALPLGPGILGLLTGIVTL, and LAGLLVLELSAEAFTLGGVLV. Positions 145–165 are disordered; sequence EEVPELETGPTVASTAKRTNQ. The span at 155 to 165 shows a compositional bias: polar residues; that stretch reads TVASTAKRTNQ.

The protein resides in the membrane. In Bos taurus (Bovine), this protein is Transmembrane protein 253 (TMEM253).